The sequence spans 370 residues: tRNA-specific 2-thiouridylase MnmA (370 aa).

Residues 6-13 (AMSGGVDS) and leucine 32 each bind ATP. Residue cysteine 101 is the Nucleophile of the active site. Cysteine 101 and cysteine 193 are oxidised to a cystine. Glycine 125 is a binding site for ATP. The segment at 143–145 (KDQ) is interaction with tRNA. Cysteine 193 (cysteine persulfide intermediate) is an active-site residue.

The protein belongs to the MnmA/TRMU family.

It localises to the cytoplasm. The catalysed reaction is S-sulfanyl-L-cysteinyl-[protein] + uridine(34) in tRNA + AH2 + ATP = 2-thiouridine(34) in tRNA + L-cysteinyl-[protein] + A + AMP + diphosphate + H(+). Catalyzes the 2-thiolation of uridine at the wobble position (U34) of tRNA, leading to the formation of s(2)U34. The protein is tRNA-specific 2-thiouridylase MnmA of Rhodococcus erythropolis (strain PR4 / NBRC 100887).